Consider the following 196-residue polypeptide: uncharacterized protein (196 aa).

FAD is bound by residues 15-22 (SQGKFNKT), 68-71 (GWWM), Tyr107, and 123-126 (TWNA).

It belongs to the oxidoreductase MdaB family. FAD is required as a cofactor.

This is an uncharacterized protein from Schizosaccharomyces pombe (strain 972 / ATCC 24843) (Fission yeast).